The primary structure comprises 438 residues: Serine hydroxymethyltransferase (438 aa).

Residues Leu133 and Gly137 to Leu139 each bind (6S)-5,6,7,8-tetrahydrofolate. Lys242 carries the N6-(pyridoxal phosphate)lysine modification.

The protein belongs to the SHMT family. In terms of assembly, homodimer. Pyridoxal 5'-phosphate is required as a cofactor.

The protein localises to the cytoplasm. It catalyses the reaction (6R)-5,10-methylene-5,6,7,8-tetrahydrofolate + glycine + H2O = (6S)-5,6,7,8-tetrahydrofolate + L-serine. The protein operates within one-carbon metabolism; tetrahydrofolate interconversion. It functions in the pathway amino-acid biosynthesis; glycine biosynthesis; glycine from L-serine: step 1/1. Catalyzes the reversible interconversion of serine and glycine with tetrahydrofolate (THF) serving as the one-carbon carrier. This reaction serves as the major source of one-carbon groups required for the biosynthesis of purines, thymidylate, methionine, and other important biomolecules. Also exhibits THF-independent aldolase activity toward beta-hydroxyamino acids, producing glycine and aldehydes, via a retro-aldol mechanism. The polypeptide is Serine hydroxymethyltransferase (Brucella suis (strain ATCC 23445 / NCTC 10510)).